We begin with the raw amino-acid sequence, 171 residues long: 3-hydroxydecanoyl-[acyl-carrier-protein] dehydratase (171 aa).

His-70 is an active-site residue.

The protein belongs to the thioester dehydratase family. FabA subfamily. Homodimer.

Its subcellular location is the cytoplasm. It catalyses the reaction a (3R)-hydroxyacyl-[ACP] = a (2E)-enoyl-[ACP] + H2O. The catalysed reaction is (3R)-hydroxydecanoyl-[ACP] = (2E)-decenoyl-[ACP] + H2O. The enzyme catalyses (2E)-decenoyl-[ACP] = (3Z)-decenoyl-[ACP]. It participates in lipid metabolism; fatty acid biosynthesis. Necessary for the introduction of cis unsaturation into fatty acids. Catalyzes the dehydration of (3R)-3-hydroxydecanoyl-ACP to E-(2)-decenoyl-ACP and then its isomerization to Z-(3)-decenoyl-ACP. Can catalyze the dehydratase reaction for beta-hydroxyacyl-ACPs with saturated chain lengths up to 16:0, being most active on intermediate chain length. The protein is 3-hydroxydecanoyl-[acyl-carrier-protein] dehydratase of Stenotrophomonas maltophilia (strain R551-3).